Consider the following 177-residue polypeptide: Large ribosomal subunit protein uL6 (177 aa).

The protein belongs to the universal ribosomal protein uL6 family. Part of the 50S ribosomal subunit.

Functionally, this protein binds to the 23S rRNA, and is important in its secondary structure. It is located near the subunit interface in the base of the L7/L12 stalk, and near the tRNA binding site of the peptidyltransferase center. The sequence is that of Large ribosomal subunit protein uL6 from Rhizobium meliloti (strain 1021) (Ensifer meliloti).